The sequence spans 61 residues: Large ribosomal subunit protein bL32 (61 aa).

The span at 1-16 (MAVPKRKTSPSRRGMR) shows a compositional bias: basic residues. Positions 1–61 (MAVPKRKTSP…RQILKPKAEA (61 aa)) are disordered. Residues 28 to 44 (VEDKDSGELRRPHHLDL) are compositionally biased toward basic and acidic residues.

The protein belongs to the bacterial ribosomal protein bL32 family.

This Xanthobacter autotrophicus (strain ATCC BAA-1158 / Py2) protein is Large ribosomal subunit protein bL32.